We begin with the raw amino-acid sequence, 359 residues long: Oxopyrrolidines biosynthesis cluster protein G (359 aa).

The tract at residues M1–T32 is disordered. Over residues S7 to S18 the composition is skewed to low complexity.

Part of the gene cluster that mediates the biosynthesis of oxopyrrolidines, polyketide-amino acid hybrid compounds with feature structures of tetramic acid. Does not seem to play a role in oxopyrrolidines A and B biosynthesis. This Penicillium oxalicum (strain 114-2 / CGMCC 5302) (Penicillium decumbens) protein is Oxopyrrolidines biosynthesis cluster protein G.